The chain runs to 140 residues: Putative esterase SSO2140 (140 aa).

Belongs to the thioesterase PaaI family.

The polypeptide is Putative esterase SSO2140 (Saccharolobus solfataricus (strain ATCC 35092 / DSM 1617 / JCM 11322 / P2) (Sulfolobus solfataricus)).